The sequence spans 329 residues: Glycerol-3-phosphate dehydrogenase [NAD(P)+] (329 aa).

NADPH is bound by residues Trp11, Arg30, and Lys103. Sn-glycerol 3-phosphate contacts are provided by Lys103, Gly132, and Ser134. Position 136 (Ala136) interacts with NADPH. 5 residues coordinate sn-glycerol 3-phosphate: Lys187, Asp240, Ser250, Arg251, and Asn252. Residue Lys187 is the Proton acceptor of the active site. An NADPH-binding site is contributed by Arg251. Positions 275 and 277 each coordinate NADPH.

Belongs to the NAD-dependent glycerol-3-phosphate dehydrogenase family.

It is found in the cytoplasm. The catalysed reaction is sn-glycerol 3-phosphate + NAD(+) = dihydroxyacetone phosphate + NADH + H(+). It catalyses the reaction sn-glycerol 3-phosphate + NADP(+) = dihydroxyacetone phosphate + NADPH + H(+). The protein operates within membrane lipid metabolism; glycerophospholipid metabolism. Functionally, catalyzes the reduction of the glycolytic intermediate dihydroxyacetone phosphate (DHAP) to sn-glycerol 3-phosphate (G3P), the key precursor for phospholipid synthesis. The chain is Glycerol-3-phosphate dehydrogenase [NAD(P)+] from Nitrosomonas eutropha (strain DSM 101675 / C91 / Nm57).